Reading from the N-terminus, the 317-residue chain is Malate dehydrogenase (317 aa).

Residues 13–18 (GAGNIG) and Asp38 each bind NAD(+). Residues Arg87 and Arg93 each coordinate substrate. NAD(+) contacts are provided by residues Asn100 and 123 to 125 (VTN). Asn125 and Arg156 together coordinate substrate. Residue His180 is the Proton acceptor of the active site.

Belongs to the LDH/MDH superfamily. MDH type 3 family.

The catalysed reaction is (S)-malate + NAD(+) = oxaloacetate + NADH + H(+). In terms of biological role, catalyzes the reversible oxidation of malate to oxaloacetate. The chain is Malate dehydrogenase from Anaplasma marginale (strain Florida).